The sequence spans 548 residues: Chaperone Ric-8A (548 aa).

Disordered regions lie at residues Asp443–Thr484 and Gly517–Asn548.

This sequence belongs to the synembryn family.

It localises to the cytoplasm. Its subcellular location is the cell cortex. In terms of biological role, chaperone that specifically binds and folds nascent G alpha proteins prior to G protein heterotrimer formation, promoting their stability and activity: folds GNAI1, GNAO1, GNA13 and GNAQ. Does not fold G(s) G-alpha proteins GNAS nor GNAL. Also acts as a guanine nucleotide exchange factor (GEF) for G alpha proteins by stimulating exchange of bound GDP for free GTP. The polypeptide is Chaperone Ric-8A (ric8a) (Danio rerio (Zebrafish)).